The following is a 505-amino-acid chain: Deoxyguanosinetriphosphate triphosphohydrolase (505 aa).

An HD domain is found at 66-273 (RLTHSMEVQQ…MEAADDISYC (208 aa)).

This sequence belongs to the dGTPase family. Type 1 subfamily. As to quaternary structure, homotetramer. Mg(2+) serves as cofactor.

It catalyses the reaction dGTP + H2O = 2'-deoxyguanosine + triphosphate + H(+). In terms of biological role, dGTPase preferentially hydrolyzes dGTP over the other canonical NTPs. This is Deoxyguanosinetriphosphate triphosphohydrolase from Salmonella schwarzengrund (strain CVM19633).